Here is a 272-residue protein sequence, read N- to C-terminus: MSMSQSRAVQRSSSPNEDRGENQLVVYDLKGNDDTEEEVLPVQSQPLSSRTQCPSIGAFTVQCASCFKWRLMPSMQKYEEIREQLLENPFFCDTAREWKPDISCDVPADIYQDGTRLWAIDKPNISRPPAGWQRLLRIRGEGGTRFADVYYVAPSGKKLRSTVEVQKYLNDNSEYIGEGVKLSQFSFQIPKPLQDDYVRKRPARLLDSIDNTNTPVAKEANPLAWISPDDHISLQLGTPTESGLNNSHYQPSKKKKTSTLSIFGSNDELADR.

A compositionally biased stretch (polar residues) spans 1–15; the sequence is MSMSQSRAVQRSSSP. The tract at residues 1–24 is disordered; that stretch reads MSMSQSRAVQRSSSPNEDRGENQL. The CW-type zinc-finger motif lies at 53–112; sequence CPSIGAFTVQCASCFKWRLMPSMQKYEEIREQLLENPFFCDTAREWKPDISCDVPADIYQ. The MBD-associated domain (MAD) motif lies at 62–104; the sequence is QCASCFKWRLMPSMQKYEEIREQLLENPFFCDTAREWKPDISC. Zn(2+)-binding residues include Cys-63, Cys-66, Cys-92, and Cys-104. An MBD domain is found at 118–192; that stretch reads WAIDKPNISR…SQFSFQIPKP (75 aa). Over residues 236–250 the composition is skewed to polar residues; sequence LGTPTESGLNNSHYQ. Residues 236-272 form a disordered region; the sequence is LGTPTESGLNNSHYQPSKKKKTSTLSIFGSNDELADR.

As to quaternary structure, interacts (via MBD domain) with DDM1. In terms of tissue distribution, expressed in buds, flowers, stems, siliques and mature seeds.

Its subcellular location is the nucleus. In terms of biological role, probable transcriptional regulator. The protein is Methyl-CpG-binding domain-containing protein 2 (MBD2) of Arabidopsis thaliana (Mouse-ear cress).